Here is a 104-residue protein sequence, read N- to C-terminus: uncharacterized protein (104 aa).

The first 25 residues, 1–25 (MVSSFFMASTLLAISSCFNSSISRA), serve as a signal peptide directing secretion. The chain crosses the membrane as a helical span at residues 79–99 (IPVVIVVEISSTLVLLLSAFL).

It localises to the membrane. This is an uncharacterized protein from Saccharomyces cerevisiae (strain ATCC 204508 / S288c) (Baker's yeast).